The sequence spans 86 residues: High affinity immunoglobulin epsilon receptor subunit gamma (86 aa).

A signal peptide spans 1-18; it reads MIPAVVLLLLLLVEQAAA. The Extracellular portion of the chain corresponds to 19 to 23; the sequence is LGEPQ. Residues 24–44 form a helical membrane-spanning segment; that stretch reads LCYILDAILFLYGIVLTLLYC. Residues 45–86 are Cytoplasmic-facing; it reads RLKIQVRKAAIASYEKSDGVYTGLSTRNQETYETLKHEKPPQ. The 29-residue stretch at 54–82 folds into the ITAM domain; sequence AIASYEKSDGVYTGLSTRNQETYETLKHE. Residue Y65 is modified to Phosphotyrosine. Phosphoserine is present on S69. The residue at position 76 (Y76) is a Phosphotyrosine. Position 78 is a phosphothreonine (T78).

The protein belongs to the CD3Z/FCER1G family. In terms of assembly, igE Fc receptor is a tetramer of an alpha chain, a beta chain, and two disulfide linked gamma chains. Associates with FCGR1A; forms a functional signaling complex. The signaling subunit of immunoglobulin gamma (IgG) Fc receptor complex. As a homodimer or a heterodimer of CD247 and FCER1G, associates with the ligand binding subunit FCGR3A to form a functional receptor complex. Associates with CLEC6A. Interacts with CLEC4E. Interacts (via ITAM domain) with SYK (via SH2 domains); activates SYK, enabling integrin-mediated activation of neutrophils and macrophages. Interacts with CSF2RB and recruits SYK in response to IL3 stimulation; this interaction is direct. Interacts with CD300LH; the interaction may be indirect. Interacts with CD300LD. Interacts with TARM1.

The protein resides in the cell membrane. Its function is as follows. Adapter protein containing an immunoreceptor tyrosine-based activation motif (ITAM) that transduces activation signals from various immunoreceptors. As a component of the high-affinity immunoglobulin E (IgE) receptor, mediates allergic inflammatory signaling in mast cells. As a constitutive component of interleukin-3 receptor complex, selectively mediates interleukin 4/IL4 production by basophils priming T-cells toward effector T-helper 2 subset. Associates with pattern recognition receptors CLEC4D and CLEC4E to form a functional signaling complex in myeloid cells. Binding of mycobacterial trehalose 6,6'-dimycolate (TDM) to this receptor complex leads to phosphorylation of ITAM, triggering activation of SYK, CARD9 and NF-kappa-B, consequently driving maturation of antigen-presenting cells and shaping antigen-specific priming of T-cells toward effector T-helper 1 and T-helper 17 cell subtypes. May function cooperatively with other activating receptors. Functionally linked to integrin beta-2/ITGB2-mediated neutrophil activation. Also involved in integrin alpha-2/ITGA2-mediated platelet activation. In Macaca fascicularis (Crab-eating macaque), this protein is High affinity immunoglobulin epsilon receptor subunit gamma (FCER1G).